The following is a 304-amino-acid chain: Sulfate adenylyltransferase subunit 2 (304 aa).

This sequence belongs to the PAPS reductase family. CysD subfamily. In terms of assembly, heterodimer composed of CysD, the smaller subunit, and CysN.

It catalyses the reaction sulfate + ATP + H(+) = adenosine 5'-phosphosulfate + diphosphate. The protein operates within sulfur metabolism; hydrogen sulfide biosynthesis; sulfite from sulfate: step 1/3. In terms of biological role, with CysN forms the ATP sulfurylase (ATPS) that catalyzes the adenylation of sulfate producing adenosine 5'-phosphosulfate (APS) and diphosphate, the first enzymatic step in sulfur assimilation pathway. APS synthesis involves the formation of a high-energy phosphoric-sulfuric acid anhydride bond driven by GTP hydrolysis by CysN coupled to ATP hydrolysis by CysD. This is Sulfate adenylyltransferase subunit 2 from Acinetobacter baumannii (strain SDF).